The sequence spans 772 residues: Phosphoribosylformylglycinamidine synthase subunit PurL (772 aa).

The active site involves H62. ATP contacts are provided by Y65 and K109. Residue E111 coordinates Mg(2+). Substrate contacts are provided by residues 112-115 (SHNH) and R134. H113 functions as the Proton acceptor in the catalytic mechanism. D135 serves as a coordination point for Mg(2+). Q259 lines the substrate pocket. Residue D287 coordinates Mg(2+). 331-333 (ESQ) provides a ligand contact to substrate. Positions 519 and 556 each coordinate ATP. N557 contacts Mg(2+). S559 contributes to the substrate binding site.

It belongs to the FGAMS family. As to quaternary structure, monomer. Part of the FGAM synthase complex composed of 1 PurL, 1 PurQ and 2 PurS subunits.

It localises to the cytoplasm. It catalyses the reaction N(2)-formyl-N(1)-(5-phospho-beta-D-ribosyl)glycinamide + L-glutamine + ATP + H2O = 2-formamido-N(1)-(5-O-phospho-beta-D-ribosyl)acetamidine + L-glutamate + ADP + phosphate + H(+). Its pathway is purine metabolism; IMP biosynthesis via de novo pathway; 5-amino-1-(5-phospho-D-ribosyl)imidazole from N(2)-formyl-N(1)-(5-phospho-D-ribosyl)glycinamide: step 1/2. Its function is as follows. Part of the phosphoribosylformylglycinamidine synthase complex involved in the purines biosynthetic pathway. Catalyzes the ATP-dependent conversion of formylglycinamide ribonucleotide (FGAR) and glutamine to yield formylglycinamidine ribonucleotide (FGAM) and glutamate. The FGAM synthase complex is composed of three subunits. PurQ produces an ammonia molecule by converting glutamine to glutamate. PurL transfers the ammonia molecule to FGAR to form FGAM in an ATP-dependent manner. PurS interacts with PurQ and PurL and is thought to assist in the transfer of the ammonia molecule from PurQ to PurL. In Leifsonia xyli subsp. xyli (strain CTCB07), this protein is Phosphoribosylformylglycinamidine synthase subunit PurL.